Here is a 398-residue protein sequence, read N- to C-terminus: Phosphoglycerate kinase (398 aa).

Substrate-binding positions include Asp21–Asn23, Arg36, His59–Arg62, Arg119, and Arg157. Residues Lys208, Gly296, Glu327, and Gly354–Ser357 each bind ATP.

The protein belongs to the phosphoglycerate kinase family. Monomer.

It is found in the cytoplasm. It catalyses the reaction (2R)-3-phosphoglycerate + ATP = (2R)-3-phospho-glyceroyl phosphate + ADP. Its pathway is carbohydrate degradation; glycolysis; pyruvate from D-glyceraldehyde 3-phosphate: step 2/5. The chain is Phosphoglycerate kinase from Streptococcus pneumoniae serotype 19F (strain G54).